Reading from the N-terminus, the 726-residue chain is Eukaryotic translation initiation factor 3 subunit B (726 aa).

The interval 1–94 is sufficient for interaction with HCR1 and TIF32; that stretch reads MSAALEDIKL…LFVECASPAD (94 aa). Residues 1 to 219 form a sufficient for interaction with PIC8 region; the sequence is MSAALEDIKL…GVVMWGGPHF (219 aa). In terms of domain architecture, RRM spans 37–120; the sequence is QYIVVCGAPV…HRLFIYTMRD (84 aa). WD repeat units follow at residues 142–182, 186–224, 235–283, 331–374, 442–485, 505–549, and 566–611; these read FPTS…EESV, RKNW…RLRR, VSPS…LQST, LKVP…MSCK, ELKD…FAPE, ITDK…TDKN, and NSFP…VKEE.

Belongs to the eIF-3 subunit B family. As to quaternary structure, component of the eukaryotic translation initiation factor 3 (eIF-3) complex.

The protein resides in the cytoplasm. In terms of biological role, RNA-binding component of the eukaryotic translation initiation factor 3 (eIF-3) complex, which is involved in protein synthesis of a specialized repertoire of mRNAs and, together with other initiation factors, stimulates binding of mRNA and methionyl-tRNAi to the 40S ribosome. The eIF-3 complex specifically targets and initiates translation of a subset of mRNAs involved in cell proliferation. The chain is Eukaryotic translation initiation factor 3 subunit B from Vanderwaltozyma polyspora (strain ATCC 22028 / DSM 70294 / BCRC 21397 / CBS 2163 / NBRC 10782 / NRRL Y-8283 / UCD 57-17) (Kluyveromyces polysporus).